The chain runs to 448 residues: Squalene synthase ERG9 (448 aa).

A helical transmembrane segment spans residues Arg-420–Leu-440.

This sequence belongs to the phytoene/squalene synthase family. Mg(2+) is required as a cofactor.

Its subcellular location is the endoplasmic reticulum membrane. It localises to the microsome. It carries out the reaction 2 (2E,6E)-farnesyl diphosphate + NADPH + H(+) = squalene + 2 diphosphate + NADP(+). The catalysed reaction is 2 (2E,6E)-farnesyl diphosphate + NADH + H(+) = squalene + 2 diphosphate + NAD(+). The protein operates within terpene metabolism; lanosterol biosynthesis; lanosterol from farnesyl diphosphate: step 1/3. Squalene synthase; part of the third module of ergosterol biosynthesis pathway that includes the late steps of the pathway. ERG9 produces squalene from 2 farnesyl pyrophosphate moieties. The third module or late pathway involves the ergosterol synthesis itself through consecutive reactions that mainly occur in the endoplasmic reticulum (ER) membrane. Firstly, the squalene synthase ERG9 catalyzes the condensation of 2 farnesyl pyrophosphate moieties to form squalene, which is the precursor of all steroids. Squalene synthase is crucial for balancing the incorporation of farnesyl diphosphate (FPP) into sterol and nonsterol isoprene synthesis. Secondly, the squalene epoxidase ERG1 catalyzes the stereospecific oxidation of squalene to (S)-2,3-epoxysqualene, which is considered to be a rate-limiting enzyme in steroid biosynthesis. Then, the lanosterol synthase ERG7 catalyzes the cyclization of (S)-2,3 oxidosqualene to lanosterol, a reaction that forms the sterol core. In the next steps, lanosterol is transformed to zymosterol through a complex process involving various demethylation, reduction and desaturation reactions. The lanosterol 14-alpha-demethylase ERG11 (also known as CYP51) catalyzes C14-demethylation of lanosterol to produce 4,4'-dimethyl cholesta-8,14,24-triene-3-beta-ol, which is critical for ergosterol biosynthesis. The C-14 reductase ERG24 reduces the C14=C15 double bond of 4,4-dimethyl-cholesta-8,14,24-trienol to produce 4,4-dimethyl-cholesta-8,24-dienol. 4,4-dimethyl-cholesta-8,24-dienol is substrate of the C-4 demethylation complex ERG25-ERG26-ERG27 in which ERG25 catalyzes the three-step monooxygenation required for the demethylation of 4,4-dimethyl and 4alpha-methylsterols, ERG26 catalyzes the oxidative decarboxylation that results in a reduction of the 3-beta-hydroxy group at the C-3 carbon to an oxo group, and ERG27 is responsible for the reduction of the keto group on the C-3. ERG28 has a role as a scaffold to help anchor ERG25, ERG26 and ERG27 to the endoplasmic reticulum and ERG29 regulates the activity of the iron-containing C4-methylsterol oxidase ERG25. Then, the sterol 24-C-methyltransferase ERG6 catalyzes the methyl transfer from S-adenosyl-methionine to the C-24 of zymosterol to form fecosterol. The C-8 sterol isomerase ERG2 catalyzes the reaction which results in unsaturation at C-7 in the B ring of sterols and thus converts fecosterol to episterol. The sterol-C5-desaturase ERG3 then catalyzes the introduction of a C-5 double bond in the B ring to produce 5-dehydroepisterol. The C-22 sterol desaturase ERG5 further converts 5-dehydroepisterol into ergosta-5,7,22,24(28)-tetraen-3beta-ol by forming the C-22(23) double bond in the sterol side chain. Finally, ergosta-5,7,22,24(28)-tetraen-3beta-ol is substrate of the C-24(28) sterol reductase ERG4 to produce ergosterol. In Candida albicans (Yeast), this protein is Squalene synthase ERG9.